A 329-amino-acid polypeptide reads, in one-letter code: 4-hydroxythreonine-4-phosphate dehydrogenase (329 aa).

Substrate contacts are provided by His136 and Thr137. A divalent metal cation-binding residues include His166, His211, and His266. 3 residues coordinate substrate: Lys274, Asn283, and Arg292.

The protein belongs to the PdxA family. Homodimer. Requires Zn(2+) as cofactor. It depends on Mg(2+) as a cofactor. Co(2+) is required as a cofactor.

The protein localises to the cytoplasm. The enzyme catalyses 4-(phosphooxy)-L-threonine + NAD(+) = 3-amino-2-oxopropyl phosphate + CO2 + NADH. Its pathway is cofactor biosynthesis; pyridoxine 5'-phosphate biosynthesis; pyridoxine 5'-phosphate from D-erythrose 4-phosphate: step 4/5. Catalyzes the NAD(P)-dependent oxidation of 4-(phosphooxy)-L-threonine (HTP) into 2-amino-3-oxo-4-(phosphooxy)butyric acid which spontaneously decarboxylates to form 3-amino-2-oxopropyl phosphate (AHAP). In Salmonella typhi, this protein is 4-hydroxythreonine-4-phosphate dehydrogenase.